Consider the following 159-residue polypeptide: UPF0262 protein RD1_1069 (159 aa).

The protein belongs to the UPF0262 family.

The polypeptide is UPF0262 protein RD1_1069 (Roseobacter denitrificans (strain ATCC 33942 / OCh 114) (Erythrobacter sp. (strain OCh 114))).